Here is a 348-residue protein sequence, read N- to C-terminus: Large ribosomal subunit protein uL3m (348 aa).

A mitochondrion-targeting transit peptide spans 1-40 (MPGWRLLTQVGAQVLGRLGDGLGAALGPGNRTHIWLFVRG).

This sequence belongs to the universal ribosomal protein uL3 family. Component of the mitochondrial large ribosomal subunit (mt-LSU). Mature mammalian 55S mitochondrial ribosomes consist of a small (28S) and a large (39S) subunit. The 28S small subunit contains a 12S ribosomal RNA (12S mt-rRNA) and 30 different proteins. The 39S large subunit contains a 16S rRNA (16S mt-rRNA), a copy of mitochondrial valine transfer RNA (mt-tRNA(Val)), which plays an integral structural role, and 52 different proteins.

The protein resides in the mitochondrion. The polypeptide is Large ribosomal subunit protein uL3m (MRPL3) (Homo sapiens (Human)).